Here is a 753-residue protein sequence, read N- to C-terminus: Fatty acid oxidation complex subunit alpha (753 aa).

The interval 8–197 (SVTHPAFTLN…KMGLVDDVVP (190 aa)) is enoyl-CoA hydratase. Positions 313–747 (RAIHRVGVLG…FYPVDANIDE (435 aa)) are 3-hydroxyacyl-CoA dehydrogenase. Positions 593-622 (SNPTLHSNSTKNSSPTKNGNSPAKRNSFKW) are disordered. Positions 599-614 (SNSTKNSSPTKNGNSP) are enriched in low complexity.

This sequence in the N-terminal section; belongs to the enoyl-CoA hydratase/isomerase family. In the central section; belongs to the 3-hydroxyacyl-CoA dehydrogenase family. As to quaternary structure, heterotetramer of two alpha chains (FadJ) and two beta chains (FadI).

It is found in the cytoplasm. The catalysed reaction is a (3S)-3-hydroxyacyl-CoA = a (2E)-enoyl-CoA + H2O. It carries out the reaction a 4-saturated-(3S)-3-hydroxyacyl-CoA = a (3E)-enoyl-CoA + H2O. It catalyses the reaction a (3S)-3-hydroxyacyl-CoA + NAD(+) = a 3-oxoacyl-CoA + NADH + H(+). The enzyme catalyses (3S)-3-hydroxybutanoyl-CoA = (3R)-3-hydroxybutanoyl-CoA. Its pathway is lipid metabolism; fatty acid beta-oxidation. In terms of biological role, catalyzes the formation of a hydroxyacyl-CoA by addition of water on enoyl-CoA. Also exhibits 3-hydroxyacyl-CoA epimerase and 3-hydroxyacyl-CoA dehydrogenase activities. This is Fatty acid oxidation complex subunit alpha from Yersinia pseudotuberculosis serotype I (strain IP32953).